We begin with the raw amino-acid sequence, 188 residues long: MKTAQEFRAGQVANINGAPWVIQKAEFNKSGRNAAVVKMKLKNLLTGAGTETVFKADDKLEPIILDRKEVTYSYFADPLYVFMDSEFNQYEIEKDDLEGVLTFIEDGMTDICEAVFYNDKVISVELPTTIVRQIAYTEPAVRGDTSGKVMKTARLNNGAELQVSAFCEIGDSIEIDTRTGEYKSRVKA.

It belongs to the elongation factor P family.

Its subcellular location is the cytoplasm. The protein operates within protein biosynthesis; polypeptide chain elongation. Its function is as follows. Involved in peptide bond synthesis. Stimulates efficient translation and peptide-bond synthesis on native or reconstituted 70S ribosomes in vitro. Probably functions indirectly by altering the affinity of the ribosome for aminoacyl-tRNA, thus increasing their reactivity as acceptors for peptidyl transferase. The chain is Elongation factor P from Pseudomonas aeruginosa (strain LESB58).